Here is a 261-residue protein sequence, read N- to C-terminus: MQMVPPSAYDRAITVFSPEGRLYQVEYAREAVRRGTTAIGIACKDGVVLAVDRRITSKLVKIRSIEKIFQIDDHVAAATSGLVADARVLIDRARLEAQIYRLTYGEEISIEMLAKKICDIKQAYTQHGGVRPFGVSLLIAGIDKNEARLFETDPSGALIEYKATAIGSGRPVVMELLEKEYRDDITLDEGLELAITALTKANEDIKPENVDVCIITVKDAQFKKIPVEEIKKLIEKVKKKLNEENKKEEENREETKEKQEE.

The interval asparagine 242–glutamate 261 is disordered.

It belongs to the peptidase T1A family. In terms of assembly, the 20S proteasome core is composed of 14 alpha and 14 beta subunits that assemble into four stacked heptameric rings, resulting in a barrel-shaped structure. The two inner rings, each composed of seven catalytic beta subunits, are sandwiched by two outer rings, each composed of seven alpha subunits. The catalytic chamber with the active sites is on the inside of the barrel. Has a gated structure, the ends of the cylinder being occluded by the N-termini of the alpha-subunits. Is capped at one or both ends by the proteasome regulatory ATPase, PAN.

The protein localises to the cytoplasm. With respect to regulation, the formation of the proteasomal ATPase PAN-20S proteasome complex, via the docking of the C-termini of PAN into the intersubunit pockets in the alpha-rings, triggers opening of the gate for substrate entry. Interconversion between the open-gate and close-gate conformations leads to a dynamic regulation of the 20S proteasome proteolysis activity. Its function is as follows. Component of the proteasome core, a large protease complex with broad specificity involved in protein degradation. The M.jannaschii proteasome is able to cleave oligopeptides after Glu, Asp, Tyr, Phe, Trp, slightly after Arg, but not after Ala. Thus, displays caspase-like and chymotrypsin-like activities and low level of trypsin-like activity. This is Proteasome subunit alpha from Methanocaldococcus jannaschii (strain ATCC 43067 / DSM 2661 / JAL-1 / JCM 10045 / NBRC 100440) (Methanococcus jannaschii).